A 430-amino-acid polypeptide reads, in one-letter code: 3-phosphoshikimate 1-carboxyvinyltransferase (430 aa).

3-phosphoshikimate-binding residues include Lys-23, Ser-24, and Arg-28. Lys-23 provides a ligand contact to phosphoenolpyruvate. Gly-95 and Arg-123 together coordinate phosphoenolpyruvate. The 3-phosphoshikimate site is built by Ser-169, Gln-171, Asp-315, and Lys-342. Gln-171 serves as a coordination point for phosphoenolpyruvate. Catalysis depends on Asp-315, which acts as the Proton acceptor. Phosphoenolpyruvate-binding residues include Arg-346 and Arg-388.

It belongs to the EPSP synthase family. Monomer.

It localises to the cytoplasm. The catalysed reaction is 3-phosphoshikimate + phosphoenolpyruvate = 5-O-(1-carboxyvinyl)-3-phosphoshikimate + phosphate. It participates in metabolic intermediate biosynthesis; chorismate biosynthesis; chorismate from D-erythrose 4-phosphate and phosphoenolpyruvate: step 6/7. Catalyzes the transfer of the enolpyruvyl moiety of phosphoenolpyruvate (PEP) to the 5-hydroxyl of shikimate-3-phosphate (S3P) to produce enolpyruvyl shikimate-3-phosphate and inorganic phosphate. The polypeptide is 3-phosphoshikimate 1-carboxyvinyltransferase (Streptococcus pyogenes serotype M3 (strain ATCC BAA-595 / MGAS315)).